A 286-amino-acid chain; its full sequence is Acetyl-coenzyme A carboxylase carboxyl transferase subunit beta (286 aa).

The 260-residue stretch at 27-286 (LMTKCPKCKL…HSEETNHATI (260 aa)) folds into the CoA carboxyltransferase N-terminal domain. Zn(2+) contacts are provided by Cys-31, Cys-34, Cys-50, and Cys-52. The segment at 31-52 (CPKCKLIQYTKQLEANLKVCVC) adopts a C4-type zinc-finger fold.

Belongs to the AccD/PCCB family. Acetyl-CoA carboxylase is a heterohexamer composed of biotin carboxyl carrier protein (AccB), biotin carboxylase (AccC) and two subunits each of ACCase subunit alpha (AccA) and ACCase subunit beta (AccD). Requires Zn(2+) as cofactor.

It is found in the cytoplasm. It catalyses the reaction N(6)-carboxybiotinyl-L-lysyl-[protein] + acetyl-CoA = N(6)-biotinyl-L-lysyl-[protein] + malonyl-CoA. It participates in lipid metabolism; malonyl-CoA biosynthesis; malonyl-CoA from acetyl-CoA: step 1/1. Its function is as follows. Component of the acetyl coenzyme A carboxylase (ACC) complex. Biotin carboxylase (BC) catalyzes the carboxylation of biotin on its carrier protein (BCCP) and then the CO(2) group is transferred by the transcarboxylase to acetyl-CoA to form malonyl-CoA. The chain is Acetyl-coenzyme A carboxylase carboxyl transferase subunit beta from Exiguobacterium sibiricum (strain DSM 17290 / CCUG 55495 / CIP 109462 / JCM 13490 / 255-15).